The chain runs to 325 residues: Glyoxylate/hydroxypyruvate reductase B (325 aa).

Catalysis depends on residues Arg-237 and Glu-266. His-285 serves as the catalytic Proton donor.

Belongs to the D-isomer specific 2-hydroxyacid dehydrogenase family. GhrB subfamily. In terms of assembly, homodimer.

The protein resides in the cytoplasm. It carries out the reaction glycolate + NADP(+) = glyoxylate + NADPH + H(+). The catalysed reaction is (R)-glycerate + NAD(+) = 3-hydroxypyruvate + NADH + H(+). The enzyme catalyses (R)-glycerate + NADP(+) = 3-hydroxypyruvate + NADPH + H(+). Its function is as follows. Catalyzes the NADPH-dependent reduction of glyoxylate and hydroxypyruvate into glycolate and glycerate, respectively. This chain is Glyoxylate/hydroxypyruvate reductase B, found in Serratia proteamaculans (strain 568).